A 226-amino-acid chain; its full sequence is UPF0758 protein LL1007 (226 aa).

The MPN domain occupies 103-225 (QVLSSREYGL…YFSFREEEIR (123 aa)). Positions 174, 176, and 187 each coordinate Zn(2+). Positions 174–187 (HNHPSGNLKPSQAD) match the JAMM motif motif.

This sequence belongs to the UPF0758 family.

This is UPF0758 protein LL1007 from Lactococcus lactis subsp. lactis (strain IL1403) (Streptococcus lactis).